We begin with the raw amino-acid sequence, 739 residues long: MKKSTIPSMSALTLAMSLAFGGAAIAQEQVTGNQFWWPEQLNLSPLRQNAVESNPYGSDYHYAEAFKSLDLDAVKKDIKALMTESQDWWPSDYGHYGPFFIRMAWHSAGVYRIFDGRGGAAGGQQRFEPLNSWPDNVNLDKARRLLWPIKQKYGSKISWGDLMVLTGNVALESMGFKTFGFAGGRVDDWEAEQVNWGSEKAWLDSKRRNEKGELAKPMGATQMGLIYVNPEGPNGVPDPLASAKEIRDTFGRMAMNDEETVALIAGGHTFGKAHGAHDPSKCVGADPAASGVEAQGLGWKNKCGKGHSEDTVTSGLEGAWSVNPTAWTMQYLENLYGFDWVQTKSPAGHIQWIPKDGKGANLVPDAHDKSKRHAPIMFTSDIALKEDPSYREITTRFLKNPKEFELAFAKAWFKLTHRDMGPKARYLGADVPAEMLIWQDPIPALDHPVIDNADIKALGNKILASGLTVPELVRTAWASASSFRGTDMRGGANGARIRLEPMMNWQANNPKELAKVLAKLEKVQKDVNSSLKGGKKVSLADVIVLGGSVAVEKAAKEAGVTVSVPFTPGRMDATQAQTDVSSFAVLEPTADGFRNYYSKDSSHSPAEMLIERANMLNLTVPEMTVLVGGLRALDANSAGVKHGVFTDKPGTLSNDFFVNLLDMSTKWSKSEKQEGIYEGQDRKSGKLKWTATPVDLVFGSHSELRAVSEVYGAQDGQDRFVQDFIKAWNKVMNADRFDI.

Positions 1 to 26 (MKKSTIPSMSALTLAMSLAFGGAAIA) are cleaved as a signal peptide. Residues 105–227 (WHSAGVYRIF…MGATQMGLIY (123 aa)) constitute a cross-link (tryptophyl-tyrosyl-methioninium (Trp-Tyr) (with M-253)). Catalysis depends on His106, which acts as the Proton acceptor. Residues 227–253 (YVNPEGPNGVPDPLASAKEIRDTFGRM) constitute a cross-link (tryptophyl-tyrosyl-methioninium (Tyr-Met) (with W-105)). His268 provides a ligand contact to heme b.

Belongs to the peroxidase family. Peroxidase/catalase subfamily. Homodimer or homotetramer. It depends on heme b as a cofactor. Post-translationally, formation of the three residue Trp-Tyr-Met cross-link is important for the catalase, but not the peroxidase activity of the enzyme.

It catalyses the reaction H2O2 + AH2 = A + 2 H2O. The catalysed reaction is 2 H2O2 = O2 + 2 H2O. Functionally, bifunctional enzyme with both catalase and broad-spectrum peroxidase activity. In Shewanella sp. (strain ANA-3), this protein is Catalase-peroxidase 2.